The sequence spans 250 residues: Probable 2' cyclic ADP-D-ribose synthase TcpB (250 aa).

The segment at 1-46 (MSKEKQAQSKAHKAQQAISSAKSLSTQKSKMSELERATRDGAAIGK) is disordered. A necessary and sufficient for phosphoinositide binding region spans residues 1-117 (MSKEKQAQSK…TASATMEAEE (117 aa)). Over residues 14–23 (AQQAISSAKS) the composition is skewed to low complexity. Residues 30–39 (KMSELERATR) are compositionally biased toward basic and acidic residues. The TIR domain maps to 117 to 250 (EEYDFFISHA…EIAKELHSLI (134 aa)). Glu-192 is an active-site residue.

As to quaternary structure, homodimer; may also form oligomers. Interacts with host TIRAP. Interacts with host MYD88. Interaction with host MYD88 was not confirmed by another study. Interacts with host TLR4. Abolishes the interaction of host TIRAP with TLR4.

The protein localises to the secreted. It localises to the host cell membrane. The catalysed reaction is NAD(+) + H2O = ADP-D-ribose + nicotinamide + H(+). It carries out the reaction NAD(+) = 2'cADPR + nicotinamide + H(+). In terms of biological role, virulence factor that interferes with host Toll-like receptor 2 (TLR2) and TLR4 signaling, resulting in the reduction of dendritic cell maturation, inhibition of pro-inflammatory cytokine secretion and impaired NF-kappa-B activation in macrophages. Interferes with host TLR4 signaling by abolishing host TLR4-TIRAP interaction (but not host TIRAP-MYD88 interaction) and its downstream signaling. Inhibits host TLR 2 induced NF-kappa-B activation and TNF (tumor necrosis factor) secretion. Binds phosphoinositide (PtdIns) via its N-terminal domain. Has NAD(+) hydrolase (NADase) activity, catalyzes cleavage of NAD(+) into ADP-D-ribose (ADPR) and nicotinamide. Also generates a cyclization variant of cyclic ADPR (cADPR), termed v-cADPR (probably 2'cADPR). The sequence is that of Probable 2' cyclic ADP-D-ribose synthase TcpB from Brucella melitensis biotype 1 (strain ATCC 23456 / CCUG 17765 / NCTC 10094 / 16M).